The chain runs to 365 residues: Testis-specific serine/threonine-protein kinase 1 (365 aa).

Residues 12-272 (YIMGINLGEG…IDEILNHCWV (261 aa)) form the Protein kinase domain. ATP contacts are provided by residues 18 to 26 (LGEGSYAKV) and K41. The active-site Proton acceptor is D136. At T174 the chain carries Phosphothreonine. Residues 282-365 (GAINKEGESS…HPQQPSETHT (84 aa)) form a disordered region. Residues 303–330 (GADKKSATKLEPREEARSEARSESKPQE) are compositionally biased toward basic and acidic residues. A compositionally biased stretch (polar residues) spans 331–347 (DTLQVVRQSENVGLSSE).

This sequence belongs to the protein kinase superfamily. CAMK Ser/Thr protein kinase family. In terms of assembly, interacts with TSSK2. Interacts with HSP90; this interaction stabilizes TSSK1. Requires Mg(2+) as cofactor. Post-translationally, autophosphorylated. Ubiquitinated; HSP90 activity negatively regulates ubiquitination and degradation. As to expression, testis-specific. Expressed only in postmeiotic spermatids at the final stages of cytodifferentiation in the seminiferous tubules (at protein level). Not detected in released sperms in the lumen of the seminiferous tubules and the epididymis.

Its subcellular location is the cytoplasm. The protein resides in the cytoplasmic vesicle. It is found in the secretory vesicle. The protein localises to the acrosome. It localises to the cell projection. Its subcellular location is the cilium. The protein resides in the flagellum. The catalysed reaction is L-seryl-[protein] + ATP = O-phospho-L-seryl-[protein] + ADP + H(+). It carries out the reaction L-threonyl-[protein] + ATP = O-phospho-L-threonyl-[protein] + ADP + H(+). With respect to regulation, activated by phosphorylation on Thr-174, potentially by autophosphorylation. Its function is as follows. Testis-specific serine/threonine-protein kinase required during spermatid development. Phosphorylates 'Ser-281' of TSKS. Involved in the late stages of spermatogenesis, during the reconstruction of the cytoplasm. During spermatogenesis, required for the transformation of a ring-shaped structure around the base of the flagellum originating from the chromatoid body. The polypeptide is Testis-specific serine/threonine-protein kinase 1 (Tssk1b) (Mus musculus (Mouse)).